Here is a 437-residue protein sequence, read N- to C-terminus: tRNA-2-methylthio-N(6)-dimethylallyladenosine synthase (437 aa).

The MTTase N-terminal domain occupies 1–115 (MKVYIETMGC…ISQVIHKEKA (115 aa)). [4Fe-4S] cluster-binding residues include C10, C46, C78, C148, C152, and C155. Positions 134–367 (KKAQIRSLLN…QNRHKEILEE (234 aa)) constitute a Radical SAM core domain. In terms of domain architecture, TRAM spans 370 to 436 (KLEVGKTHVV…KGRLMATTKG (67 aa)).

The protein belongs to the methylthiotransferase family. MiaB subfamily. In terms of assembly, monomer. It depends on [4Fe-4S] cluster as a cofactor.

Its subcellular location is the cytoplasm. It catalyses the reaction N(6)-dimethylallyladenosine(37) in tRNA + (sulfur carrier)-SH + AH2 + 2 S-adenosyl-L-methionine = 2-methylsulfanyl-N(6)-dimethylallyladenosine(37) in tRNA + (sulfur carrier)-H + 5'-deoxyadenosine + L-methionine + A + S-adenosyl-L-homocysteine + 2 H(+). Functionally, catalyzes the methylthiolation of N6-(dimethylallyl)adenosine (i(6)A), leading to the formation of 2-methylthio-N6-(dimethylallyl)adenosine (ms(2)i(6)A) at position 37 in tRNAs that read codons beginning with uridine. The polypeptide is tRNA-2-methylthio-N(6)-dimethylallyladenosine synthase (Helicobacter pylori (strain J99 / ATCC 700824) (Campylobacter pylori J99)).